The primary structure comprises 101 residues: MSRRCELTGKAVQVGHLVSHSNRKTKCRFLPNLCNVTLQSDALNRRVRLRVTAHALRSVEHRGGLDAFLIKAREIELSQTARLLKRDIEKKIAETATPAAA.

It belongs to the bacterial ribosomal protein bL28 family.

This is Large ribosomal subunit protein bL28 from Methylorubrum populi (strain ATCC BAA-705 / NCIMB 13946 / BJ001) (Methylobacterium populi).